The sequence spans 395 residues: MTQVVPGIAPHGGQLIQRIATAAERQEFLAQADHLPRVQLDERALSDLVMIAIGGFSPLNGFMGQTDYESVVDDMRLANGLPWSVPITLSVTEEVAEPLKEGGWVRLDDAQGRFVGVLELTQKYRYNKVHEATNVYRTDEEQHPGVAVVYAQGPINLAGPIWLLQRDAHPLFPSYQIDPIASRQQFADRGWKTVVGFQTRNPIHRAHEYIIKCALETVDGLFLHPLVGATKSDDIPADVRMRCYEIMLEHYFPQDRVILAINPSAMRYAGPREAIFHALIRKNYGCTHFIVGRDHAGVGNYYGTYDAQHLFDEFKPEELGILPMKFEHAFYCTRTQAMASTKTSPSSPEERIHLSGTKVRELLRKGELPPPEFSRPEVAAELIRAMRSDSEVAAV.

This sequence belongs to the sulfate adenylyltransferase family.

The catalysed reaction is sulfate + ATP + H(+) = adenosine 5'-phosphosulfate + diphosphate. Its pathway is sulfur metabolism; hydrogen sulfide biosynthesis; sulfite from sulfate: step 1/3. In Synechococcus elongatus (strain ATCC 33912 / PCC 7942 / FACHB-805) (Anacystis nidulans R2), this protein is Sulfate adenylyltransferase.